The sequence spans 245 residues: MAPK-interacting and spindle-stabilizing protein-like (245 aa).

Residues 1-245 (MSDEFSLADA…PMPGGPHSYH (245 aa)) are disordered. Ser-2 carries the post-translational modification N-acetylserine. Ser-2, Ser-6, and Ser-15 each carry phosphoserine. The segment covering 17-26 (AKTSAVSNTK) has biased composition (polar residues). Positions 34-51 (WPGSNPWNNPSAPSSVPS) are enriched in low complexity. Pro residues-rich tracts occupy residues 74-127 (SVPP…PELP), 164-190 (PNMP…PPVP), and 198-207 (AWGPPAPYPA).

The protein belongs to the MISS family.

The polypeptide is MAPK-interacting and spindle-stabilizing protein-like (MAPK1IP1L) (Homo sapiens (Human)).